The following is an 87-amino-acid chain: UPF0235 protein TGRD_618 (87 aa).

It belongs to the UPF0235 family.

This Endomicrobium trichonymphae protein is UPF0235 protein TGRD_618.